We begin with the raw amino-acid sequence, 333 residues long: 4-hydroxy-2-oxovalerate aldolase (333 aa).

The region spanning 3–253 is the Pyruvate carboxyltransferase domain; the sequence is ILINDSTLRD…NTGIDLYHFL (251 aa). Residue 11 to 12 participates in substrate binding; that stretch reads RD. D12 contributes to the Mn(2+) binding site. The active-site Proton acceptor is H15. Residues S165 and H192 each coordinate substrate. Mn(2+) is bound by residues H192 and H194.

It belongs to the 4-hydroxy-2-oxovalerate aldolase family. Interacts with MhpF.

It carries out the reaction (S)-4-hydroxy-2-oxopentanoate = acetaldehyde + pyruvate. It participates in aromatic compound metabolism; 3-phenylpropanoate degradation. In terms of biological role, catalyzes the retro-aldol cleavage of 4-hydroxy-2-oxopentanoate to pyruvate and acetaldehyde. Is involved in the meta-cleavage pathway for the degradation of aromatic compounds. This is 4-hydroxy-2-oxovalerate aldolase from Serratia proteamaculans (strain 568).